We begin with the raw amino-acid sequence, 281 residues long: Apulose-4-phosphate transketolase subunit A (281 aa).

Belongs to the transketolase family. As to quaternary structure, probable heterodimer composed of AptA and AptB. The cofactor is thiamine diphosphate.

It carries out the reaction apulose 4-phosphate + D-glyceraldehyde 3-phosphate = D-xylulose 5-phosphate + dihydroxyacetone phosphate. The protein operates within carbohydrate metabolism. Its function is as follows. Involved in catabolism of D-apiose. Catalyzes the transfer of the glycolaldehyde group from apulose-4-phosphate to D-glyceraldehyde 3-phosphate, generating dihydroxyacetone phosphate and D-xylulose-5-phosphate. This chain is Apulose-4-phosphate transketolase subunit A, found in Phocaeicola vulgatus (strain ATCC 8482 / DSM 1447 / JCM 5826 / CCUG 4940 / NBRC 14291 / NCTC 11154) (Bacteroides vulgatus).